Reading from the N-terminus, the 248-residue chain is Putative eukaryotic initiation factor 4A-like protein (248 aa).

The short motif at 14-42 is the Q motif element; it reads VGFASLGLNEQLINNIKRYGITKLTPFQM. The Helicase ATP-binding domain occupies 45–239; that stretch reads IKEIKENSNV…NTFIKIPKII (195 aa). 58–65 is a binding site for ATP; sequence SIEGTGRT. Positions 185-188 match the DEAD box motif; the sequence is DELD.

This sequence belongs to the DEAD box helicase family. eIF4A subfamily.

This chain is Putative eukaryotic initiation factor 4A-like protein, found in Dictyostelium discoideum (Social amoeba).